The sequence spans 96 residues: uncharacterized protein (96 aa).

The helical transmembrane segment at 13–35 (PVVRYVVALLHWLLWRVVVIIAI) threads the bilayer.

Its subcellular location is the membrane. This is an uncharacterized protein from Archaeoglobus fulgidus (strain ATCC 49558 / DSM 4304 / JCM 9628 / NBRC 100126 / VC-16).